Reading from the N-terminus, the 264-residue chain is Thymidylate synthase (264 aa).

DUMP is bound at residue Arg21. (6R)-5,10-methylene-5,6,7,8-tetrahydrofolate is bound at residue His51. DUMP is bound at residue 126–127 (RR). Catalysis depends on Cys146, which acts as the Nucleophile. DUMP contacts are provided by residues 166 to 169 (RSAD), Asn177, and 207 to 209 (HLY). Asp169 serves as a coordination point for (6R)-5,10-methylene-5,6,7,8-tetrahydrofolate. A (6R)-5,10-methylene-5,6,7,8-tetrahydrofolate-binding site is contributed by Ala263.

Belongs to the thymidylate synthase family. Bacterial-type ThyA subfamily. In terms of assembly, homodimer.

Its subcellular location is the cytoplasm. It carries out the reaction dUMP + (6R)-5,10-methylene-5,6,7,8-tetrahydrofolate = 7,8-dihydrofolate + dTMP. Its pathway is pyrimidine metabolism; dTTP biosynthesis. Its function is as follows. Catalyzes the reductive methylation of 2'-deoxyuridine-5'-monophosphate (dUMP) to 2'-deoxythymidine-5'-monophosphate (dTMP) while utilizing 5,10-methylenetetrahydrofolate (mTHF) as the methyl donor and reductant in the reaction, yielding dihydrofolate (DHF) as a by-product. This enzymatic reaction provides an intracellular de novo source of dTMP, an essential precursor for DNA biosynthesis. In Chelativorans sp. (strain BNC1), this protein is Thymidylate synthase.